The following is a 234-amino-acid chain: Sugar fermentation stimulation protein A (234 aa).

Residues 201 to 220 constitute a DNA-binding region (H-T-H motif); it reads LLSEAQQRGVEILAYKAEIS.

The protein belongs to the SfsA family.

Binds to DNA non-specifically. Could be a regulatory factor involved in maltose metabolism. The sequence is that of Sugar fermentation stimulation protein A from Shigella sonnei (strain Ss046).